The sequence spans 507 residues: Ribose import ATP-binding protein RbsA 2 (507 aa).

2 consecutive ABC transporter domains span residues 7 to 245 and 249 to 498; these read FSLD…VGRN and LFTR…MPQS. Residue 39–46 coordinates ATP; that stretch reads GENGAGKS.

This sequence belongs to the ABC transporter superfamily. Ribose importer (TC 3.A.1.2.1) family. In terms of assembly, the complex is composed of an ATP-binding protein (RbsA), two transmembrane proteins (RbsC) and a solute-binding protein (RbsB).

The protein localises to the cell inner membrane. It catalyses the reaction D-ribose(out) + ATP + H2O = D-ribose(in) + ADP + phosphate + H(+). Its function is as follows. Part of the ABC transporter complex RbsABC involved in ribose import. Responsible for energy coupling to the transport system. In Mesorhizobium japonicum (strain LMG 29417 / CECT 9101 / MAFF 303099) (Mesorhizobium loti (strain MAFF 303099)), this protein is Ribose import ATP-binding protein RbsA 2.